The sequence spans 170 residues: Tubulin polymerization-promoting protein family member 2 (170 aa).

Residues 105–117 (TTGVTKSTTVGGV) show a composition bias toward low complexity. The segment at 105 to 170 (TTGVTKSTTV…GAGTYDKKNQ (66 aa)) is disordered. Residues 129–149 (THKERFDESGKGKGIEGREET) are compositionally biased toward basic and acidic residues.

Belongs to the TPPP family. Only expressed in male reproductive organs, including testis. Expressed in elongating spermatids at stages IV-VIII of the seminiferous epithelial cycle in testis and in mature sperm in the epididymis.

The protein localises to the cytoplasm. Its subcellular location is the cytosol. It localises to the cell projection. It is found in the cilium. The protein resides in the flagellum. In terms of biological role, probable regulator of microtubule dynamics required for sperm motility. In contrast to other members of the family, has no microtubule bundling activity. This Mus musculus (Mouse) protein is Tubulin polymerization-promoting protein family member 2.